Reading from the N-terminus, the 203-residue chain is Tic20 family protein Ycf60 (203 aa).

Transmembrane regions (helical) follow at residues 2–22, 51–71, 84–104, 131–151, and 153–173; these read IRLFTFGIITMLVLVIARLAI, IIPYYLPLFEGLQNFGQYVLP, ILLPMLIFYMNHAILGLVTFF, ILLFLVGSLFGAIFRAFPIEF, and ISFIGLTVCNMMFWFILSTIT.

It belongs to the Tic20 family.

Its subcellular location is the plastid. The protein localises to the chloroplast membrane. This Porphyra purpurea (Red seaweed) protein is Tic20 family protein Ycf60 (ycf60).